The following is a 491-amino-acid chain: Cobyric acid synthase (491 aa).

Residues 253–429 (ARRVAVIRLP…WHGALEGDEL (177 aa)) enclose the GATase cobBQ-type domain. Cys334 functions as the Nucleophile in the catalytic mechanism. Residue His421 is part of the active site.

Belongs to the CobB/CobQ family. CobQ subfamily.

Its pathway is cofactor biosynthesis; adenosylcobalamin biosynthesis. Its function is as follows. Catalyzes amidations at positions B, D, E, and G on adenosylcobyrinic A,C-diamide. NH(2) groups are provided by glutamine, and one molecule of ATP is hydrogenolyzed for each amidation. The polypeptide is Cobyric acid synthase (Mycolicibacterium gilvum (strain PYR-GCK) (Mycobacterium gilvum (strain PYR-GCK))).